The sequence spans 258 residues: Triosephosphate isomerase (258 aa).

Position 11 to 13 (11 to 13 (NWK)) interacts with substrate. Residue His101 is the Electrophile of the active site. Glu173 serves as the catalytic Proton acceptor. Substrate-binding positions include Gly179, Ser219, and 240-241 (GG).

This sequence belongs to the triosephosphate isomerase family. Homodimer.

The protein localises to the cytoplasm. It catalyses the reaction D-glyceraldehyde 3-phosphate = dihydroxyacetone phosphate. The protein operates within carbohydrate biosynthesis; gluconeogenesis. It functions in the pathway carbohydrate degradation; glycolysis; D-glyceraldehyde 3-phosphate from glycerone phosphate: step 1/1. In terms of biological role, involved in the gluconeogenesis. Catalyzes stereospecifically the conversion of dihydroxyacetone phosphate (DHAP) to D-glyceraldehyde-3-phosphate (G3P). This is Triosephosphate isomerase from Streptomyces coelicolor (strain ATCC BAA-471 / A3(2) / M145).